Here is a 495-residue protein sequence, read N- to C-terminus: Cytochrome P450 monooxygenase 64 (495 aa).

The helical transmembrane segment at 2-22 (FLQIVTSVLATGLLYALISVL) threads the bilayer. N-linked (GlcNAc...) asparagine glycosylation is found at asparagine 25 and asparagine 198. Cysteine 428 serves as a coordination point for heme.

It belongs to the cytochrome P450 family. Heme is required as a cofactor.

The protein localises to the membrane. It functions in the pathway secondary metabolite biosynthesis. Functionally, cytochrome P450 monooxygenase that is able to use 4-ethoxybenzoic acid as a substrate for oxidation. The protein is Cytochrome P450 monooxygenase 64 of Postia placenta (strain ATCC 44394 / Madison 698-R) (Brown rot fungus).